The chain runs to 471 residues: MKIKTRFAPSPTGYLHVGGARTALYSWLFARNHGGEFVLRIEDTDLERSTPEAIEAIMDGMNWLSLEWDEGPYYQTKRFDRYNAVIDQMLEEGTAYKCYCSKERLEALREEQMAKGEKPRYDGRCRHSHEHHADDEPCVVRFANPQEGSVVFDDQIRGPIEFSNQELDDLIIRRTDGSPTYNFCVVVDDWDMEITHVIRGEDHINNTPRQINILKALKAPVPVYAHVSMINGDDGKKLSKRHGAVSVMQYRDDGYLPEALLNYLVRLGWSHGDQEIFTREEMIKYFTLNAVSKSASAFNTDKLLWLNHHYINALPPEYVATHLQWHIEQENIDTRNGPQLADLVKLLGERCKTLKEMAQSCRYFYEDFAEFDADAAKKHLRPVARQPLEVVRDKLAAITDWTAENVHHAIQATADELEVGMGKVGMPLRVAVTGAGQSPALDVTVHAIGRTRSIERINKALAFIAERENQQ.

The short motif at 9–19 (PSPTGYLHVGG) is the 'HIGH' region element. Zn(2+) is bound by residues Cys98, Cys100, Cys125, and His127. A 'KMSKS' region motif is present at residues 237–241 (KLSKR). Lys240 lines the ATP pocket.

It belongs to the class-I aminoacyl-tRNA synthetase family. Glutamate--tRNA ligase type 1 subfamily. As to quaternary structure, monomer. The cofactor is Zn(2+).

The protein localises to the cytoplasm. The enzyme catalyses tRNA(Glu) + L-glutamate + ATP = L-glutamyl-tRNA(Glu) + AMP + diphosphate. Catalyzes the attachment of glutamate to tRNA(Glu) in a two-step reaction: glutamate is first activated by ATP to form Glu-AMP and then transferred to the acceptor end of tRNA(Glu). The polypeptide is Glutamate--tRNA ligase (Shigella boydii serotype 18 (strain CDC 3083-94 / BS512)).